Consider the following 484-residue polypeptide: Tribbles (484 aa).

A compositionally biased stretch (polar residues) spans 1-23 (MDNSSGQNSRTASSASTSKIVNY). Positions 1–51 (MDNSSGQNSRTASSASTSKIVNYSSPVSPGVAAATSSSSSSSSSGMSSSQE) are disordered. Residues 24 to 49 (SSPVSPGVAAATSSSSSSSSSGMSSS) show a composition bias toward low complexity. Residues 129–397 (YRHLVDLTAS…ASHIFLTPWL (269 aa)) form the Protein kinase domain. Composition is skewed to acidic residues over residues 420 to 437 (AEED…DEEG) and 475 to 484 (PEPDTDVDMG). Disordered regions lie at residues 420–443 (AEED…PLGD) and 464–484 (MAQN…VDMG).

Belongs to the protein kinase superfamily. CAMK Ser/Thr protein kinase family. Tribbles subfamily. As to quaternary structure, interacts with slbo. Interacts with Akt1. Expressed throughout the brain with highest levels of expression detected in the cell body rind and lower levels of expression detected in the neurophil (at protein level).

The protein resides in the nucleus. It localises to the cytoplasm. The protein localises to the cell cortex. Functionally, adapter protein that negatively regulates different signaling pathways to coordinate cell differentiation, proliferation, migration and growth. Functions by binding to key regulatory proteins and either blocks their activity or regulates their turnover by the proteasome. In various developing tissues functions as a cell cycle regulator that mediates cell proliferation according to the requirements of the developmental program. Acts by inducing the proteasomal degradation of the CD25 mitotic activators stg and twe at critical stages of development to delay entry into mitosis and thus mediate cell proliferation. During gastrulation, negatively regulates stg to delay mitosis in the ventral region of the embryonic mesoderm thus allowing invagination to be completed before cell division takes place. Delaying stg-dependent mitosis during bristle development and in migrating germline pole cells also arrests their cell divisions, whereas in cystocytes it promotes their cell divisions. Involved in the regulation of the mid-blastula transition; promotes the destruction of twe resulting in the cell cycle arrest in G2 of cycle 14 which delays mitosis and thus reduces cell proliferation allowing cell fate specification and morphogenesis to take place. In germline cells, blocks border cell migration during oogenesis by binding to slbo/C/EBP and promoting its ubiquitination and degradation by the proteasome. May function in a negative feedback loop with slbo to coordinate proper border cell migration. During tissue growth negatively regulates insulin signaling by binding to Akt1 and blocking its phosphorylation-dependent activation. However it may also function downstream in the insulin signaling pathway, acting with Akt1 to direct foxo degradation. Essential for the proper formation of operant place and aversive olfactory memories. This chain is Tribbles, found in Drosophila melanogaster (Fruit fly).